We begin with the raw amino-acid sequence, 216 residues long: Large ribosomal subunit protein uL24m (216 aa).

The N-terminal 9 residues, 1 to 9 (MRLSALLAL), are a transit peptide targeting the mitochondrion. At Ser-24 the chain carries Phosphoserine. One can recognise a KOW domain in the interval 56–89 (LFCGDTVEILEGKDAGKQGKVVQVIRQRNWVVVG).

This sequence belongs to the universal ribosomal protein uL24 family. Component of the mitochondrial large ribosomal subunit (mt-LSU). Mature mammalian 55S mitochondrial ribosomes consist of a small (28S) and a large (39S) subunit. The 28S small subunit contains a 12S ribosomal RNA (12S mt-rRNA) and 30 different proteins. The 39S large subunit contains a 16S rRNA (16S mt-rRNA), a copy of mitochondrial valine transfer RNA (mt-tRNA(Val)), which plays an integral structural role, and 52 different proteins.

It is found in the mitochondrion. This Homo sapiens (Human) protein is Large ribosomal subunit protein uL24m (MRPL24).